The sequence spans 281 residues: Ribosomal RNA small subunit methyltransferase A (281 aa).

6 residues coordinate S-adenosyl-L-methionine: Asn-25, Leu-27, Gly-52, Glu-73, Asp-99, and Asn-118.

It belongs to the class I-like SAM-binding methyltransferase superfamily. rRNA adenine N(6)-methyltransferase family. RsmA subfamily.

It localises to the cytoplasm. It carries out the reaction adenosine(1518)/adenosine(1519) in 16S rRNA + 4 S-adenosyl-L-methionine = N(6)-dimethyladenosine(1518)/N(6)-dimethyladenosine(1519) in 16S rRNA + 4 S-adenosyl-L-homocysteine + 4 H(+). Specifically dimethylates two adjacent adenosines (A1518 and A1519) in the loop of a conserved hairpin near the 3'-end of 16S rRNA in the 30S particle. May play a critical role in biogenesis of 30S subunits. The chain is Ribosomal RNA small subunit methyltransferase A from Erythrobacter litoralis (strain HTCC2594).